The primary structure comprises 197 residues: RIP-like protein (197 aa).

Residues 1–20 (MNSTQSPVYRTSVEQKRHAQ) form a disordered region. An RIP-type zinc finger spans residues 122–191 (CPVCQIKNLR…GQLYDMCGSC (70 aa)).

The protein is RIP-like protein (Ripalpha) of Drosophila melanogaster (Fruit fly).